Consider the following 123-residue polypeptide: Small ribosomal subunit protein uS12 (123 aa).

Positions 1–28 (MPTIQQLIRKPRQPKVKRSKSMHLEQCP) are disordered. The span at 9–21 (RKPRQPKVKRSKS) shows a compositional bias: basic residues. Position 89 is a 3-methylthioaspartic acid (aspartate 89).

Belongs to the universal ribosomal protein uS12 family. In terms of assembly, part of the 30S ribosomal subunit. Contacts proteins S8 and S17. May interact with IF1 in the 30S initiation complex.

In terms of biological role, with S4 and S5 plays an important role in translational accuracy. Interacts with and stabilizes bases of the 16S rRNA that are involved in tRNA selection in the A site and with the mRNA backbone. Located at the interface of the 30S and 50S subunits, it traverses the body of the 30S subunit contacting proteins on the other side and probably holding the rRNA structure together. The combined cluster of proteins S8, S12 and S17 appears to hold together the shoulder and platform of the 30S subunit. This chain is Small ribosomal subunit protein uS12, found in Ruegeria sp. (strain TM1040) (Silicibacter sp.).